Reading from the N-terminus, the 475-residue chain is ATP synthase subunit beta (475 aa).

An ATP-binding site is contributed by 155 to 162 (GGAGVGKT).

Belongs to the ATPase alpha/beta chains family. As to quaternary structure, F-type ATPases have 2 components, CF(1) - the catalytic core - and CF(0) - the membrane proton channel. CF(1) has five subunits: alpha(3), beta(3), gamma(1), delta(1), epsilon(1). CF(0) has three main subunits: a(1), b(2) and c(9-12). The alpha and beta chains form an alternating ring which encloses part of the gamma chain. CF(1) is attached to CF(0) by a central stalk formed by the gamma and epsilon chains, while a peripheral stalk is formed by the delta and b chains.

The protein localises to the cell inner membrane. It catalyses the reaction ATP + H2O + 4 H(+)(in) = ADP + phosphate + 5 H(+)(out). Its function is as follows. Produces ATP from ADP in the presence of a proton gradient across the membrane. The catalytic sites are hosted primarily by the beta subunits. This is ATP synthase subunit beta from Rhizobium etli (strain CIAT 652).